We begin with the raw amino-acid sequence, 390 residues long: Dynein regulatory complex subunit 5 (390 aa).

LRR repeat units follow at residues 182-205 (TETL…MLAS), 210-233 (NLSI…ALAK), and 238-261 (HSVI…SLAR).

This sequence belongs to the DRC5 family. Component of the nexin-dynein regulatory complex (N-DRC). Interacts with DRC1, DRC2, DRC3, DRC4, DRC7 and DRC11.

Its subcellular location is the cell projection. The protein localises to the cilium. It localises to the flagellum. It is found in the cytoplasm. The protein resides in the cytoskeleton. Its subcellular location is the flagellum axoneme. Functionally, component of the nexin-dynein regulatory complex (N-DRC) a key regulator of ciliary/flagellar motility which maintains the alignment and integrity of the distal axoneme and regulates microtubule sliding in motile axonemes. May play a role in the assembly of N-DRC. The protein is Dynein regulatory complex subunit 5 of Chlamydomonas reinhardtii (Chlamydomonas smithii).